A 270-amino-acid polypeptide reads, in one-letter code: Malonyl-[acyl-carrier protein] O-methyltransferase (270 aa).

The protein belongs to the methyltransferase superfamily.

The catalysed reaction is malonyl-[ACP] + S-adenosyl-L-methionine = malonyl-[ACP] methyl ester + S-adenosyl-L-homocysteine. It participates in cofactor biosynthesis; biotin biosynthesis. Converts the free carboxyl group of a malonyl-thioester to its methyl ester by transfer of a methyl group from S-adenosyl-L-methionine (SAM). It allows to synthesize pimeloyl-ACP via the fatty acid synthetic pathway. The chain is Malonyl-[acyl-carrier protein] O-methyltransferase from Marinomonas sp. (strain MWYL1).